Here is a 409-residue protein sequence, read N- to C-terminus: ORC1-type DNA replication protein 1 (409 aa).

Residues threonine 63–alanine 67, tyrosine 206, and arginine 218 contribute to the ATP site.

It belongs to the CDC6/cdc18 family.

Involved in regulation of DNA replication. This chain is ORC1-type DNA replication protein 1 (cdc6-1), found in Archaeoglobus fulgidus (strain ATCC 49558 / DSM 4304 / JCM 9628 / NBRC 100126 / VC-16).